The primary structure comprises 210 residues: Large ribosomal subunit protein uL4 (210 aa).

Belongs to the universal ribosomal protein uL4 family. In terms of assembly, part of the 50S ribosomal subunit.

In terms of biological role, one of the primary rRNA binding proteins, this protein initially binds near the 5'-end of the 23S rRNA. It is important during the early stages of 50S assembly. It makes multiple contacts with different domains of the 23S rRNA in the assembled 50S subunit and ribosome. Forms part of the polypeptide exit tunnel. This Orientia tsutsugamushi (strain Boryong) (Rickettsia tsutsugamushi) protein is Large ribosomal subunit protein uL4.